The sequence spans 325 residues: Aspartate carbamoyltransferase catalytic subunit (325 aa).

Carbamoyl phosphate contacts are provided by Arg55 and Thr56. Lys83 contacts L-aspartate. 3 residues coordinate carbamoyl phosphate: Arg105, His135, and Gln138. Residues Arg176 and Arg230 each coordinate L-aspartate. Residues Gly271 and Pro272 each contribute to the carbamoyl phosphate site.

The protein belongs to the aspartate/ornithine carbamoyltransferase superfamily. ATCase family. As to quaternary structure, heterododecamer (2C3:3R2) of six catalytic PyrB chains organized as two trimers (C3), and six regulatory PyrI chains organized as three dimers (R2).

It carries out the reaction carbamoyl phosphate + L-aspartate = N-carbamoyl-L-aspartate + phosphate + H(+). Its pathway is pyrimidine metabolism; UMP biosynthesis via de novo pathway; (S)-dihydroorotate from bicarbonate: step 2/3. Its function is as follows. Catalyzes the condensation of carbamoyl phosphate and aspartate to form carbamoyl aspartate and inorganic phosphate, the committed step in the de novo pyrimidine nucleotide biosynthesis pathway. The polypeptide is Aspartate carbamoyltransferase catalytic subunit (Streptomyces avermitilis (strain ATCC 31267 / DSM 46492 / JCM 5070 / NBRC 14893 / NCIMB 12804 / NRRL 8165 / MA-4680)).